The chain runs to 134 residues: Small ribosomal subunit protein uS8c (134 aa).

The protein belongs to the universal ribosomal protein uS8 family. Part of the 30S ribosomal subunit.

The protein resides in the plastid. Its subcellular location is the chloroplast. Functionally, one of the primary rRNA binding proteins, it binds directly to 16S rRNA central domain where it helps coordinate assembly of the platform of the 30S subunit. The sequence is that of Small ribosomal subunit protein uS8c (rps8) from Lactuca sativa (Garden lettuce).